The chain runs to 295 residues: Ribosomal protein L11 methyltransferase (295 aa).

The S-adenosyl-L-methionine site is built by Thr150, Gly171, Asp193, and Asn232.

It belongs to the methyltransferase superfamily. PrmA family.

Its subcellular location is the cytoplasm. The enzyme catalyses L-lysyl-[protein] + 3 S-adenosyl-L-methionine = N(6),N(6),N(6)-trimethyl-L-lysyl-[protein] + 3 S-adenosyl-L-homocysteine + 3 H(+). Its function is as follows. Methylates ribosomal protein L11. This is Ribosomal protein L11 methyltransferase from Methylobacillus flagellatus (strain ATCC 51484 / DSM 6875 / VKM B-1610 / KT).